The primary structure comprises 968 residues: MPFSLGQRWISDTESELGLGTVIGLEGRMVTLMFPATDENRMFARDDAPLTRVIYNPGDIIESHEGWSLKVSEIEEKNQLVIYHGIHTETGEEVSLRETLLNHNIRFNKPQDRLFAGQIDRLDRFGVRYQSQLLRHKLATSDLLGLQGPRVGLIPHQQWIAHEVGQRFAPRVLLADEVGLGKTIEAGLIIHQQLLTGRAERILIIVPDTLRHQWLVEMLRRFNLRFSVFDEDRCVEAYADHDNPFYTEQLVICSLELLRKKKRLDQALDADWDLMVVDEAHHLEWTEEEPSRAYRVVEALSEVVPGVLLLTATPDQLGHQSHFARLRLLDPDRFYDYQAFLKEEESYKEVASAADALASGKRLPDEAVASLTELLNEKDITPALRLIEDESVDNEQRDQARSELLQELLDRHGTGRVLYRNSRASVKGFPTRIFNAHPQTMPAQYKTAARVSDMMGGQTDLTAKVKQALSPEKLYQAFESDSASWWKFDPRVDWLIDFLKNHRSKKVLIIASQAETALSLEEALRTREGIQATVFHEGMSIIERDKAGAYFAQESGGAQALICSEIGSEGRNFQFASHLVLFDLPLNPDLLEQRIGRLDRIGQANDVEIHLPYLANTAQENLMNWYHKGLNAFEQTCPTGHILFNEFSEELLTQLVYRDEDKFTQLLNHTQSRYKALKKAMEQGRDKLLEINSHGGDKAQKLVENLAARDQDTQLIGSVIRLWDIIGVEQEDSGENAIVLHPSEHMMFPTYPGLPEDGITVTFDREMALSRDDIALITQEHPLVQTGLDLITSSETGTTSVAVLKNKALPAGTIFLELIYMADASAPRSSQLYRYMPPTPVRVLLDKNGNNLSQNVSYESFDKQLSAVNRHIASKLVNASQTLLHPLFAKGEEFAQAAMKQLTEEASNKMTQQLTAELERLEALKAVNPNIRDEELEHLRNQMVELGNYLDACQLQLDAVRLVLVSHA.

The Helicase ATP-binding domain maps to 163 to 332 (EVGQRFAPRV…FARLRLLDPD (170 aa)). ATP is bound at residue 176-183 (DEVGLGKT). The DEAH box motif lies at 278–281 (DEAH). Residues 491 to 645 (RVDWLIDFLK…TCPTGHILFN (155 aa)) form the Helicase C-terminal domain.

Belongs to the SNF2/RAD54 helicase family. RapA subfamily. In terms of assembly, interacts with the RNAP. Has a higher affinity for the core RNAP than for the holoenzyme. Its ATPase activity is stimulated by binding to RNAP.

Functionally, transcription regulator that activates transcription by stimulating RNA polymerase (RNAP) recycling in case of stress conditions such as supercoiled DNA or high salt concentrations. Probably acts by releasing the RNAP, when it is trapped or immobilized on tightly supercoiled DNA. Does not activate transcription on linear DNA. Probably not involved in DNA repair. The polypeptide is RNA polymerase-associated protein RapA (Shewanella loihica (strain ATCC BAA-1088 / PV-4)).